We begin with the raw amino-acid sequence, 332 residues long: Glucokinase (332 aa).

15-20 contacts ATP; that stretch reads ADIGGT.

The protein belongs to the bacterial glucokinase family.

It is found in the cytoplasm. It catalyses the reaction D-glucose + ATP = D-glucose 6-phosphate + ADP + H(+). The sequence is that of Glucokinase from Campylobacter jejuni subsp. doylei (strain ATCC BAA-1458 / RM4099 / 269.97).